We begin with the raw amino-acid sequence, 483 residues long: MQTLNRRDFPGRSHPDKIIQFGEGNFLRAFVDWQIDLLNEHTDLNAGIVVIRPIDTDFPPSLSTQDGLYTAVIRGLNEQGEAVRESRLIRSVNREINIYRQFDEYLALARDPNIRFMFSNTTEAGIAWNEADQFSDAPPSSFPAKLTRLLFERFEHFSGAADKGWVLLPCELIDYNGEALRELVLRYASHWQLPAAFTQWLTENNTFCSTLVDRIVTGYPRDEVAALQAELGYQDSFLDTAEYFYLFVIQGPKELAQELRLDKLDLNVRIVDDIKPYKERKVAILNGAHTALVPVAYLSGLDTVGQTMDDVQISSFVEKTITEEIVPVLDLPEDELLSFSQAVLSRFRNPFIQHQLLSIALNGMTKFRTRILPQLLTYQQQQGKLPPRLTFALAALIAFYRGERDGQTYPLQDDAHWLERYSTLWNGVKHGDIKLAELVNTVLSDTAHWGQDLTAVPQLANQVTEQLQTIIDSGMRAAVAAYS.

An NAD(+)-binding site is contributed by 18 to 29 (IIQFGEGNFLRA).

This sequence belongs to the mannitol dehydrogenase family. UxaB subfamily.

It carries out the reaction D-altronate + NAD(+) = keto-D-tagaturonate + NADH + H(+). The protein operates within carbohydrate metabolism; pentose and glucuronate interconversion. This chain is Altronate oxidoreductase, found in Yersinia enterocolitica serotype O:8 / biotype 1B (strain NCTC 13174 / 8081).